The primary structure comprises 178 residues: Small ribosomal subunit protein uS4 (178 aa).

One can recognise an S4 RNA-binding domain in the interval 104 to 166; sequence RRLQTLVYRK…PNSPMALENH (63 aa).

Belongs to the universal ribosomal protein uS4 family. In terms of assembly, part of the 30S ribosomal subunit. Contacts protein S5. The interaction surface between S4 and S5 is involved in control of translational fidelity.

Functionally, one of the primary rRNA binding proteins, it binds directly to 16S rRNA where it nucleates assembly of the body of the 30S subunit. With S5 and S12 plays an important role in translational accuracy. In Methanococcus vannielii (strain ATCC 35089 / DSM 1224 / JCM 13029 / OCM 148 / SB), this protein is Small ribosomal subunit protein uS4.